The following is a 269-amino-acid chain: D-aminoacyl-tRNA deacylase (269 aa).

It belongs to the DtdA deacylase family. In terms of assembly, monomer. The cofactor is Zn(2+).

It catalyses the reaction a D-aminoacyl-tRNA + H2O = a tRNA + a D-alpha-amino acid + H(+). The catalysed reaction is glycyl-tRNA(Ala) + H2O = tRNA(Ala) + glycine + H(+). D-aminoacyl-tRNA deacylase with broad substrate specificity. By recycling D-aminoacyl-tRNA to D-amino acids and free tRNA molecules, this enzyme counteracts the toxicity associated with the formation of D-aminoacyl-tRNA entities in vivo. This Caldivirga maquilingensis (strain ATCC 700844 / DSM 13496 / JCM 10307 / IC-167) protein is D-aminoacyl-tRNA deacylase.